The primary structure comprises 83 residues: U20-theraphotoxin-Cg1a 2 (83 aa).

A signal peptide spans 1–21; it reads MQVSVLITLAVLGVMFVWTSA. A propeptide spanning residues 22–47 is cleaved from the precursor; it reads AELEERGSDQPAWLKSLERIFQSEER. 3 cysteine pairs are disulfide-bonded: Cys49/Cys63, Cys56/Cys68, and Cys62/Cys76.

Belongs to the neurotoxin 10 (Hwtx-1) family. 40 (Jztx-35) subfamily. Expressed by the venom gland.

It is found in the secreted. Functionally, probable ion channel inhibitor. The sequence is that of U20-theraphotoxin-Cg1a 2 from Chilobrachys guangxiensis (Chinese earth tiger tarantula).